A 97-amino-acid chain; its full sequence is Exodeoxyribonuclease 7 small subunit (97 aa).

The tract at residues 1–22 (MAKTASPGATPPGNGTEPLPDN) is disordered.

The protein belongs to the XseB family. Heterooligomer composed of large and small subunits.

The protein localises to the cytoplasm. The enzyme catalyses Exonucleolytic cleavage in either 5'- to 3'- or 3'- to 5'-direction to yield nucleoside 5'-phosphates.. Functionally, bidirectionally degrades single-stranded DNA into large acid-insoluble oligonucleotides, which are then degraded further into small acid-soluble oligonucleotides. In Burkholderia lata (strain ATCC 17760 / DSM 23089 / LMG 22485 / NCIMB 9086 / R18194 / 383), this protein is Exodeoxyribonuclease 7 small subunit.